The chain runs to 468 residues: tRNA (guanine(37)-N(1))-methyltransferase 1 (468 aa).

Residues histidine 207, 245 to 246 (DL), and 273 to 274 (DA) each bind S-adenosyl-L-methionine. The disordered stretch occupies residues 301 to 348 (KEAAVSRGGETNSSGEEIRESNASINEPLGANKKPSGTTKTENGVGKD). The span at 309–325 (GETNSSGEEIRESNASI) shows a compositional bias: polar residues. Asparagine 380 lines the S-adenosyl-L-methionine pocket.

The protein belongs to the class I-like SAM-binding methyltransferase superfamily. TRM5/TYW2 family. As to quaternary structure, monomer.

It is found in the mitochondrion matrix. Its subcellular location is the nucleus. It localises to the cytoplasm. It carries out the reaction guanosine(37) in tRNA + S-adenosyl-L-methionine = N(1)-methylguanosine(37) in tRNA + S-adenosyl-L-homocysteine + H(+). In terms of biological role, specifically methylates the N1 position of guanosine-37 in various cytoplasmic and mitochondrial tRNAs. Methylation is not dependent on the nature of the nucleoside 5' of the target nucleoside. This is the first step in the biosynthesis of wybutosine (yW), a modified base adjacent to the anticodon of tRNAs and required for accurate decoding. This chain is tRNA (guanine(37)-N(1))-methyltransferase 1, found in Arabidopsis thaliana (Mouse-ear cress).